The following is a 592-amino-acid chain: ATP-dependent lipid A-core flippase (592 aa).

The next 6 membrane-spanning stretches (helical) occupy residues 31-51 (LSSF…EGII), 76-96 (AMLV…TYFL), 134-154 (AVIF…ITLV), 161-181 (LALL…VAVI), 261-281 (VTQF…MVQA), and 288-308 (VGGF…LKHL). Residues 35 to 317 (ILAMVAMGVV…LTDVNQPMQR (283 aa)) form the ABC transmembrane type-1 domain. The ABC transporter domain maps to 349–587 (LRFEHVTFRY…DGLYAGLHRI (239 aa)). 383-390 (GPSGSGKT) serves as a coordination point for ATP.

Belongs to the ABC transporter superfamily. Lipid exporter (TC 3.A.1.106) family. As to quaternary structure, homodimer.

The protein localises to the cell inner membrane. It catalyses the reaction ATP + H2O + lipid A-core oligosaccharideSide 1 = ADP + phosphate + lipid A-core oligosaccharideSide 2.. Involved in lipopolysaccharide (LPS) biosynthesis. Translocates lipid A-core from the inner to the outer leaflet of the inner membrane. Transmembrane domains (TMD) form a pore in the inner membrane and the ATP-binding domain (NBD) is responsible for energy generation. In Ralstonia nicotianae (strain ATCC BAA-1114 / GMI1000) (Ralstonia solanacearum), this protein is ATP-dependent lipid A-core flippase.